The primary structure comprises 560 residues: Arginine--tRNA ligase (560 aa).

The 'HIGH' region motif lies at 122–132 (ANPNGPLHIGH).

This sequence belongs to the class-I aminoacyl-tRNA synthetase family.

The protein resides in the cytoplasm. The catalysed reaction is tRNA(Arg) + L-arginine + ATP = L-arginyl-tRNA(Arg) + AMP + diphosphate. In Methanothermobacter thermautotrophicus (strain ATCC 29096 / DSM 1053 / JCM 10044 / NBRC 100330 / Delta H) (Methanobacterium thermoautotrophicum), this protein is Arginine--tRNA ligase (argS).